Reading from the N-terminus, the 139-residue chain is Superoxide dismutase [Cu-Zn] (139 aa).

Cysteine 6 is lipidated: S-palmitoyl cysteine. Positions 47 and 49 each coordinate Cu cation. Zn(2+) contacts are provided by histidine 72, histidine 81, and aspartate 84. Histidine 114 contributes to the Cu cation binding site. Positions 118–129 (DDLGKGGNDESL) are enriched in basic and acidic residues. Residues 118 to 139 (DDLGKGGNDESLKTGNAGGRMA) are disordered.

It belongs to the Cu-Zn superoxide dismutase family. Homodimer. It depends on Cu cation as a cofactor. The cofactor is Zn(2+).

It localises to the cytoplasm. The protein localises to the nucleus. The enzyme catalyses 2 superoxide + 2 H(+) = H2O2 + O2. Functionally, destroys radicals which are normally produced within the cells and which are toxic to biological systems. The polypeptide is Superoxide dismutase [Cu-Zn] (sod1) (Lampanyctus crocodilus (Jewel lanternfish)).